Here is a 438-residue protein sequence, read N- to C-terminus: Aflatoxin cluster transcriptional coactivator aflS (438 aa).

The region spanning Leu65–Val134 is the HTH iclR-type domain. Residues Phe95–Arg114 constitute a DNA-binding region (H-T-H motif).

In terms of assembly, interacts with aflR.

The protein resides in the nucleus. It localises to the endosome. Functionally, transcription coactivator involved in regulation of the aflatoxin biosynthesis gene cluster with aflR. The ratio of the expression data between aflS:aflR plays a crucial role in the regulation of aflatoxins production. A high ratio, produced at a range between 17 and 30 degrees Celsius, corresponds with the production profile of aflatoxin G1 biosynthesis. A low ratio, produced over 30 degrees Celsius, is related to aflatoxin B1 biosynthesis. AflJ may act in aflR transport to or from the nucleus, thus controlling the availability of aflR for transcriptional activation of aflatoxin biosynthesis cluster genes. AflJ may also assist in directing endosomes to the cytoplasmic membrane for aflatoxin export. The sequence is that of Aflatoxin cluster transcriptional coactivator aflS from Aspergillus parasiticus (strain ATCC 56775 / NRRL 5862 / SRRC 143 / SU-1).